Reading from the N-terminus, the 281-residue chain is Probable feruloyl esterase A (281 aa).

An N-terminal signal peptide occupies residues 1 to 21 (MKQFSAKYALILLATAGQALA). Disulfide bonds link cysteine 50–cysteine 279, cysteine 112–cysteine 115, and cysteine 248–cysteine 255. Aspartate 98 is a binding site for substrate. Asparagine 100 carries N-linked (GlcNAc...) asparagine glycosylation. A substrate-binding site is contributed by tyrosine 101. The Nucleophile role is filled by serine 154. Aspartate 215 (charge relay system) is an active-site residue. Histidine 268 is a substrate binding site. Histidine 268 serves as the catalytic Charge relay system.

Belongs to the AB hydrolase superfamily. FaeA family.

The protein localises to the secreted. The enzyme catalyses feruloyl-polysaccharide + H2O = ferulate + polysaccharide.. Its function is as follows. Involved in degradation of plant cell walls. Hydrolyzes the feruloyl-arabinose ester bond in arabinoxylans, and the feruloyl-galactose ester bond in pectin. This chain is Probable feruloyl esterase A (faeA), found in Aspergillus niger (strain ATCC MYA-4892 / CBS 513.88 / FGSC A1513).